The following is a 210-amino-acid chain: DNA-directed RNA polymerase III subunit rpc31 (210 aa).

S103 carries the phosphoserine modification. Residues 151 to 210 (KDESSEAAHPNIEEEPDEGLEEEDEDFGDDDDNDYGENYFDNGEGDDYDDYDGDEGAIYE) are disordered. Composition is skewed to acidic residues over residues 163–185 (EEEPDEGLEEEDEDFGDDDDNDY) and 193–210 (GEGDDYDDYDGDEGAIYE).

Belongs to the eukaryotic RPC7 RNA polymerase subunit family. In terms of assembly, component of the RNA polymerase III (Pol III) complex.

Its subcellular location is the cytoplasm. It localises to the nucleus. DNA-dependent RNA polymerase catalyzes the transcription of DNA into RNA using the four ribonucleoside triphosphates as substrates. Specific peripheric component of RNA polymerase III which synthesizes small RNAs, such as 5S rRNA and tRNAs. The chain is DNA-directed RNA polymerase III subunit rpc31 (rpc31) from Schizosaccharomyces pombe (strain 972 / ATCC 24843) (Fission yeast).